A 190-amino-acid chain; its full sequence is Probable chorismate pyruvate-lyase (190 aa).

Substrate is bound by residues arginine 74, leucine 112, and glutamate 173.

The protein belongs to the UbiC family.

The protein resides in the cytoplasm. The enzyme catalyses chorismate = 4-hydroxybenzoate + pyruvate. It participates in cofactor biosynthesis; ubiquinone biosynthesis. Removes the pyruvyl group from chorismate, with concomitant aromatization of the ring, to provide 4-hydroxybenzoate (4HB) for the ubiquinone pathway. This chain is Probable chorismate pyruvate-lyase, found in Bordetella bronchiseptica (strain ATCC BAA-588 / NCTC 13252 / RB50) (Alcaligenes bronchisepticus).